A 357-amino-acid polypeptide reads, in one-letter code: Transcription factor PCF6 (357 aa).

The segment at 1–29 (MEAAVGDGEGGGGGGGRGKRGRGGGGGEM) is disordered. The span at 7-16 (DGEGGGGGGG) shows a compositional bias: gly residues. The 59-residue stretch at 52–110 (GKDRHSKVYTAKGIRDRRVRLSVATAIQFYDLQDRLGFDQPSKAIEWLINAASPAIDTL) folds into the TCP domain. Disordered stretches follow at residues 125 to 162 (AADAAPTRRRSQQQQQQLSNKSGCSSTSETSKGSDKEV) and 281 to 307 (ANRGTLQSNSPSNMSGHHHHHHQQQLQ). 2 stretches are compositionally biased toward polar residues: residues 142–155 (LSNKSGCSSTSETS) and 284–295 (GTLQSNSPSNMS).

As to quaternary structure, forms homodimers and heterodimers.

The protein resides in the nucleus. Its function is as follows. Transcription activator. Binds the promoter core sequence 5'-GGNCC-3'. This Oryza sativa subsp. japonica (Rice) protein is Transcription factor PCF6 (PCF6).